The sequence spans 118 residues: Large ribosomal subunit protein bL20 (118 aa).

It belongs to the bacterial ribosomal protein bL20 family.

Binds directly to 23S ribosomal RNA and is necessary for the in vitro assembly process of the 50S ribosomal subunit. It is not involved in the protein synthesizing functions of that subunit. The sequence is that of Large ribosomal subunit protein bL20 from Methylibium petroleiphilum (strain ATCC BAA-1232 / LMG 22953 / PM1).